A 474-amino-acid polypeptide reads, in one-letter code: Fumarate hydratase class II (474 aa).

Substrate is bound by residues 104–106 (SGT), 128–131 (HPND), 138–140 (SSN), and Thr186. Residue His187 is the Proton donor/acceptor of the active site. Ser318 is an active-site residue. Residues Ser319 and 324–326 (KVN) contribute to the substrate site.

The protein belongs to the class-II fumarase/aspartase family. Fumarase subfamily. Homotetramer.

Its subcellular location is the cytoplasm. The enzyme catalyses (S)-malate = fumarate + H2O. The protein operates within carbohydrate metabolism; tricarboxylic acid cycle; (S)-malate from fumarate: step 1/1. Involved in the TCA cycle. Catalyzes the stereospecific interconversion of fumarate to L-malate. In Mycobacterium bovis (strain ATCC BAA-935 / AF2122/97), this protein is Fumarate hydratase class II.